The chain runs to 295 residues: MASAREIRRRIKSVKNTGKITKAMELVSASKMRRAQRNVLATRPYADRLYDVMGELTLRSMGGGTKHPLLQPHPTVTRVALILITPDRGLCGALNSNLTRAAARFITDQKSQGRSVSVIAIGKKGRDFILRVGQKLDSEIIGLGDAPPLVDVLPAATTAINGYSPDASGNYDYDEVYLLCAEFVNTLVQRPKLRRFLPVEAPGNAGATKVDYSYEPSQEDVLDQLLPRFIEVQLYQAILESIASEHSARMMAMRNANDNAKELVRDLTLTYNKARQAAITTEISEIAAGATALNQ.

Belongs to the ATPase gamma chain family. In terms of assembly, F-type ATPases have 2 components, CF(1) - the catalytic core - and CF(0) - the membrane proton channel. CF(1) has five subunits: alpha(3), beta(3), gamma(1), delta(1), epsilon(1). CF(0) has three main subunits: a, b and c.

The protein localises to the cell membrane. Produces ATP from ADP in the presence of a proton gradient across the membrane. The gamma chain is believed to be important in regulating ATPase activity and the flow of protons through the CF(0) complex. This chain is ATP synthase gamma chain, found in Herpetosiphon aurantiacus (strain ATCC 23779 / DSM 785 / 114-95).